A 493-amino-acid chain; its full sequence is Intermediate cleaving peptidase 55, mitochondrial (493 aa).

A mitochondrion-targeting transit peptide spans 1-19 (MQFLARNLVRRVSRTQVVS). Mn(2+) is bound by residues Asp-296, Asp-307, His-383, Glu-410, and Glu-433.

Belongs to the peptidase M24B family. Mn(2+) is required as a cofactor.

It localises to the mitochondrion. The protein resides in the nucleus. Functionally, aminopeptidase which cleaves preprotein intermediates that carry destabilizing N-ter amino acid residues after the mitochondrial processing peptidase (MPP) cleavage site and is thus critical for stabilization of the mitochondrial proteome. The protein is Intermediate cleaving peptidase 55, mitochondrial of Arabidopsis thaliana (Mouse-ear cress).